Reading from the N-terminus, the 197-residue chain is ATP-dependent Clp protease proteolytic subunit (197 aa).

The active-site Nucleophile is Ser-98. Residue His-123 is part of the active site.

Belongs to the peptidase S14 family. Fourteen ClpP subunits assemble into 2 heptameric rings which stack back to back to give a disk-like structure with a central cavity, resembling the structure of eukaryotic proteasomes.

It is found in the cytoplasm. The enzyme catalyses Hydrolysis of proteins to small peptides in the presence of ATP and magnesium. alpha-casein is the usual test substrate. In the absence of ATP, only oligopeptides shorter than five residues are hydrolyzed (such as succinyl-Leu-Tyr-|-NHMec, and Leu-Tyr-Leu-|-Tyr-Trp, in which cleavage of the -Tyr-|-Leu- and -Tyr-|-Trp bonds also occurs).. Its function is as follows. Cleaves peptides in various proteins in a process that requires ATP hydrolysis. Has a chymotrypsin-like activity. Plays a major role in the degradation of misfolded proteins. This chain is ATP-dependent Clp protease proteolytic subunit, found in Enterococcus faecalis (strain ATCC 700802 / V583).